A 359-amino-acid polypeptide reads, in one-letter code: Protein Wnt-5b (359 aa).

Positions 1–17 are cleaved as a signal peptide; it reads MPSLLLLFTAALLSSWA. A disulfide bridge links Cys83 with Cys94. N-linked (GlcNAc...) asparagine glycans are attached at residues Asn93 and Asn99. Intrachain disulfides connect Cys133–Cys141, Cys143–Cys161, Cys217–Cys231, Cys219–Cys226, Cys288–Cys319, Cys304–Cys314, Cys318–Cys358, Cys334–Cys349, Cys336–Cys346, and Cys341–Cys342. Ser223 carries the O-palmitoleoyl serine; by PORCN lipid modification. N-linked (GlcNAc...) asparagine glycans are attached at residues Asn291 and Asn305.

This sequence belongs to the Wnt family. In terms of assembly, interacts with PORCN. In terms of processing, palmitoleoylation is required for efficient binding to frizzled receptors. Depalmitoleoylation leads to Wnt signaling pathway inhibition.

The protein resides in the secreted. It is found in the extracellular space. It localises to the extracellular matrix. Functionally, ligand for members of the frizzled family of seven transmembrane receptors. Probable developmental protein. May be a signaling molecule which affects the development of discrete regions of tissues. Is likely to signal over only few cell diameters. The protein is Protein Wnt-5b (WNT5B) of Homo sapiens (Human).